Consider the following 243-residue polypeptide: HTH-type transcriptional regulator MlrA (243 aa).

The HTH merR-type domain maps to 3 to 72 (LYTIGEVALL…VSKVKMLLSN (70 aa)). Residues 6–25 (IGEVALLCDINPVTLRAWQR) constitute a DNA-binding region (H-T-H motif).

In terms of assembly, interacts with DgcM and PdeR.

Activity is regulated by DgcM and PdeR. In terms of biological role, activates transcription of csgD, the master regulator of biofilm formation, by binding to its promoter region. Also controls the transcription of cadC and ibaG. Part of a signaling cascade that regulates curli biosynthesis. The cascade is composed of two c-di-GMP control modules, in which c-di-GMP controlled by the DgcE/PdeH pair (module I) regulates the activity of the DgcM/PdeR pair (module II), which in turn regulates activity of the transcription factor MlrA. The protein is HTH-type transcriptional regulator MlrA of Escherichia coli (strain K12).